The following is a 520-amino-acid chain: Cytochrome P450 monooxygenase btcC (520 aa).

A helical transmembrane segment spans residues 2-22; it reads IFLLTLAGLKVLSIVILFGII. N177 is a glycosylation site (N-linked (GlcNAc...) asparagine). Position 448 (C448) interacts with heme. N511 carries N-linked (GlcNAc...) asparagine glycosylation.

Belongs to the cytochrome P450 family. Heme is required as a cofactor.

The protein localises to the membrane. It functions in the pathway secondary metabolite biosynthesis; terpenoid biosynthesis. Its function is as follows. Cytochrome P4590 monooxygenase part of the gene cluster that mediates the biosynthesis of betaestacins. The bifunctional terpene synthase btcA converts isopentenyl diphosphate (IPP) and dimethylallyl diphosphate (DMAPP) into the sesterterpene betaestacin I. The C-terminal prenyltransferase (PT) domain of btcA catalyzes formation of GFPP, whereas the N-terminal terpene cyclase (TC) domain catalyzes the cyclization of GFPP into betaestacin I. The cytochrome P450 monooxygenase btcB oxidizes the C25 methyl group of betaestacin I to yield the carboxylic acid betaestacin IV via the alcohol betaestacin III. The cytochrome P450 monooxygenase btcC further catalyzes the multistep oxidation of betaestacin IV to produce several compounds, including betaestacins Va, Vb, Vc and VI. The sequence is that of Cytochrome P450 monooxygenase btcC from Colletotrichum orbiculare (strain 104-T / ATCC 96160 / CBS 514.97 / LARS 414 / MAFF 240422) (Cucumber anthracnose fungus).